Reading from the N-terminus, the 337-residue chain is UDP-3-O-acylglucosamine N-acyltransferase (337 aa).

The active-site Proton acceptor is H238.

Belongs to the transferase hexapeptide repeat family. LpxD subfamily. In terms of assembly, homotrimer.

The enzyme catalyses a UDP-3-O-[(3R)-3-hydroxyacyl]-alpha-D-glucosamine + a (3R)-hydroxyacyl-[ACP] = a UDP-2-N,3-O-bis[(3R)-3-hydroxyacyl]-alpha-D-glucosamine + holo-[ACP] + H(+). It functions in the pathway bacterial outer membrane biogenesis; LPS lipid A biosynthesis. Catalyzes the N-acylation of UDP-3-O-acylglucosamine using 3-hydroxyacyl-ACP as the acyl donor. Is involved in the biosynthesis of lipid A, a phosphorylated glycolipid that anchors the lipopolysaccharide to the outer membrane of the cell. This Xanthomonas euvesicatoria pv. vesicatoria (strain 85-10) (Xanthomonas campestris pv. vesicatoria) protein is UDP-3-O-acylglucosamine N-acyltransferase.